A 631-amino-acid chain; its full sequence is Nucleoside triphosphatase I (631 aa).

In terms of domain architecture, Helicase ATP-binding spans 42-204 (FLGLDSMHSL…TMLVNLLRPG (163 aa)). 55–62 (HETGVGKT) serves as a coordination point for ATP. The DEXH box signature appears at 141 to 144 (DECH). Residues 367–532 (KFIDVCLGIL…EFVQLFRVFK (166 aa)) form the Helicase C-terminal domain. Positions 457-524 (DIFILDMTWN…EIIQSKSKEF (68 aa)) are binding to the cap-specific mRNA (nucleoside-2'-O-)-methyltransferase.

Belongs to the helicase family. NPH I subfamily. In terms of assembly, monomer. Interacts (via C-terminus) with RAP94/OPG109 (via N-terminus). Interacts with the cap-specific mRNA (nucleoside-2'-O-)-methyltransferase OPG102.

The protein resides in the virion. It carries out the reaction a ribonucleoside 5'-triphosphate + H2O = a ribonucleoside 5'-diphosphate + phosphate + H(+). In terms of biological role, DNA-dependent ATPase that acts as a 5' to 3' translocase on single-stranded DNA and thereby plays a role in transcription termination of viral early genes. Uses forward translocation in concert with the viral RNA polymerase RAP94/OPG109 subunit and the capping enzyme/VTF to catalyze release of UUUUUNU-containing nascent RNA from the elongation complex. In addition, acts as a positive elongation factor to assist transcription through problematic sequences. This is Nucleoside triphosphatase I (OPG123) from Variola virus (isolate Human/India/Ind3/1967) (VARV).